Here is a 230-residue protein sequence, read N- to C-terminus: Protein FAM3A (230 aa).

The N-terminal stretch at 1–33 (MRLAGPLRIVVLVVSVGVTWIVVSILLGGPGSG) is a signal peptide. Intrachain disulfides connect C59–C87 and C65–C222. A GG-type lectin domain is found at 68–226 (EHLAFRVVSG…LEMEGCIPRR (159 aa)).

It belongs to the FAM3 family. In terms of tissue distribution, in similar amounts in testis, pancreas, adrenal, placenta, brain, fetal brain, liver, kidney, skeletal muscle and heart.

Its subcellular location is the secreted. Functionally, may act as a defensin against invading fungal microorganisms. The protein is Protein FAM3A (FAM3A) of Homo sapiens (Human).